A 1313-amino-acid chain; its full sequence is Envelopment polyprotein (1313 aa).

Residues 1 to 17 (MIFTILNVLTRAMLVMS) form the signal peptide. The Lumenal portion of the chain corresponds to 18-712 (MYSLTTWDST…HSTLSAILTS (695 aa)). N-linked (GlcNAc...) asparagine; by host glycans are attached at residues N76 and N102. Positions 178–237 (MQVLMSEIEQLKNQLSKKRNERGQEKRDAEKVMSDLMARNSDLRKHNDILTAEISQMKNK) form a coiled coil. The segment at 250–270 (TVVPAILSVALLSSSVAPIIA) is internal signal sequence for glycoprotein N. 12 disulfide bridges follow: C303-C312, C352-C362, C373-C404, C394-C407, C432-C579, C450-C460, C501-C557, C525-C536, C543-C548, C602-C605, C609-C679, and C629-C634. The N-linked (GlcNAc...) asparagine; by host glycan is linked to N496. Residues 713-733 (FLLILFIYTVFSVTTNILYVL) traverse the membrane as a helical segment. Positions 731–773 (YVLRLIPKQLKSPVGWLKLFINWLLTALRIKTRNVMRRINQRI) are golgi retention signal. Over 734-791 (RLIPKQLKSPVGWLKLFINWLLTALRIKTRNVMRRINQRIGWVDHHDVERPRHREPMR) the chain is Cytoplasmic. Positions 769–773 (INQRI) are important for correct targeting of the glycoproteins to the Golgi complex but not for heterodimerization. Residues 793–809 (FKTTLLLTLIMMTGGNA) form an internal signal sequence for glycoprotein C region. 12 disulfides stabilise this stretch: C810/C850, C823/C832, C875/C971, C890/C1084, C896/C944, C902/C951, C907/C933, C937/C942, C1053/C1066, C1148/C1220, C1158/C1161, and C1168/C1202. The Lumenal segment spans residues 810-1278 (CSNTVVANSK…LDWLGGPMKA (469 aa)). The tract at residues 896–902 (CHLVGDC) is fusion loop. Residues 938 to 949 (GAIGCGCFNINP) form a fusion loop region. N-linked (GlcNAc...) asparagine; by host glycosylation is present at N1154. N-linked (GlcNAc...) asparagine; by host glycosylation occurs at N1243. Residues 1279-1299 (ILKILGFIAIGIVCFVLFMIL) traverse the membrane as a helical segment. Topologically, residues 1300 to 1313 (IRIAVNSINIKKKN) are cytoplasmic.

Belongs to the phlebovirus envelope glycoprotein family. As to quaternary structure, heterodimer with glycoprotein C. Interacts with nucleocapsid protein N and with the polymerase L in order to package them into virus particles. Heterodimer with glycoprotein C. Homotrimer (postfusion). Interacts with nucleocapsid protein N and with the polymerase L in order to package them into virus particles. Interacts with host E3 ubiquitin-protein ligase UBR4; this interaction is important for viral RNA production. Post-translationally, specific enzymatic cleavages in vivo yield mature proteins including NSm protein, Glycoprotein C, and Glycoprotein N. In terms of processing, glycosylated. The glycans can attach to host CD209/DC-SIGN, and may play a role in virus entry into dendritic cells. Palmitoylated.

It is found in the virion membrane. It localises to the host Golgi apparatus membrane. The protein localises to the host endoplasmic reticulum membrane. Functionally, structural component of the virion that interacts with glycoprotein C. It shields the hydrophobic fusion loops of the glycoprotein C, preventing premature fusion. The glycoprotein protrusions are arranged on an icosahedral lattice, with T=12 triangulation. They are able to attach the virion to the host cell receptor CD209/DC-SIGN and to promote fusion of membranes with the late endosome after endocytosis of the virion. Plays a role in the packaging of ribonucleoproteins and polymerase during virus assembly. In terms of biological role, structural component of the virion that interacts with glycoprotein N. Acts as a class II fusion protein that is activated upon acidification and subsequent repositioning of the glycoprotein N. The glycoprotein protrusions are arranged on an icosahedral lattice, with T=12 triangulation. They are able to attach the virion to the host cell receptor CD209/DC-SIGN and to promote fusion of membranes with the late endosome after endocytosis of the virion. Plays a role for virus dissemination in mosquitoes. The chain is Envelopment polyprotein (GP) from Homo sapiens (Human).